Consider the following 372-residue polypeptide: Aryl-hydrocarbon-interacting protein-like 1 (372 aa).

Positions 53-145 (RQVDQPMHII…DLDELQKEPQ (93 aa)) constitute a PPIase FKBP-type domain. 3 TPR repeats span residues 178-211 (VPVL…LRNL), 230-263 (NTLT…HPGI), and 264-297 (VKAY…EPSM). Positions 315-372 (KQEEERLRCRNMLSQGATQPPTEPPAEPHTAPPAELSTGPPAEPPAELPLSPGHSLQH) are disordered. Residues 335–345 (PTEPPAEPHTA) are compositionally biased toward pro residues.

In terms of assembly, interacts with NUB1.

Its subcellular location is the cytoplasm. The protein localises to the nucleus. In terms of biological role, may be important in protein trafficking and/or protein folding and stabilization. In Papio cynocephalus (Yellow baboon), this protein is Aryl-hydrocarbon-interacting protein-like 1 (AIPL1).